The following is a 226-amino-acid chain: Aspartyl protease inhibitor (226 aa).

A signal peptide spans 1 to 15 (MKLLFLCALIALTAA). Disordered regions lie at residues 95–116 (GKKG…KKPS) and 196–218 (EAKQ…QPNV). A disulfide bond links Cys-131 and Cys-222.

Belongs to the protease inhibitor I33 family.

The protein resides in the secreted. Aspartyl protease inhibitor. This Parelaphostrongylus tenuis (Meningeal worm) protein is Aspartyl protease inhibitor.